The chain runs to 76 residues: Putative phosphotransferase enzyme IIA component YyzE (76 aa).

The PTS EIIA type-1 domain occupies 1 to 76 (MVTPTKHAIG…LHQKIFTVVS (76 aa)). The active-site Tele-phosphohistidine intermediate is histidine 22.

It is found in the cytoplasm. Functionally, the phosphoenolpyruvate-dependent sugar phosphotransferase system (PTS), a major carbohydrate active -transport system, catalyzes the phosphorylation of incoming sugar substrates concomitant with their translocation across the cell membrane. The sequence is that of Putative phosphotransferase enzyme IIA component YyzE (yyzE) from Bacillus subtilis (strain 168).